A 150-amino-acid chain; its full sequence is D-aminoacyl-tRNA deacylase (150 aa).

The Gly-cisPro motif, important for rejection of L-amino acids motif lies at 138 to 139 (GP).

The protein belongs to the DTD family. In terms of assembly, homodimer.

It localises to the cytoplasm. The catalysed reaction is glycyl-tRNA(Ala) + H2O = tRNA(Ala) + glycine + H(+). It carries out the reaction a D-aminoacyl-tRNA + H2O = a tRNA + a D-alpha-amino acid + H(+). An aminoacyl-tRNA editing enzyme that deacylates mischarged D-aminoacyl-tRNAs. Also deacylates mischarged glycyl-tRNA(Ala), protecting cells against glycine mischarging by AlaRS. Acts via tRNA-based rather than protein-based catalysis; rejects L-amino acids rather than detecting D-amino acids in the active site. By recycling D-aminoacyl-tRNA to D-amino acids and free tRNA molecules, this enzyme counteracts the toxicity associated with the formation of D-aminoacyl-tRNA entities in vivo and helps enforce protein L-homochirality. In Thermosipho melanesiensis (strain DSM 12029 / CIP 104789 / BI429), this protein is D-aminoacyl-tRNA deacylase.